The chain runs to 1051 residues: Ubiquitin-activating enzyme E1 2 (1051 aa).

Over residues 1–32 (MLPRKREIVAGEVEDLQKKTRAGEGEATREEG) the composition is skewed to basic and acidic residues. Residues 1-42 (MLPRKREIVAGEVEDLQKKTRAGEGEATREEGDAAMAGRGNE) are disordered. A run of 2 repeats spans residues 56 to 194 (GRET…GSVF) and 453 to 605 (GSTL…QMVI). Residues 56 to 605 (GRETMKPLFG…GAKCNTQMVI (550 aa)) are 2 approximate repeats. Residues Ala-472, Asp-498, Arg-509, Lys-522, and 570-571 (DN) contribute to the ATP site. Catalysis depends on Cys-626, which acts as the Glycyl thioester intermediate.

This sequence belongs to the ubiquitin-activating E1 family. In terms of assembly, monomer.

It catalyses the reaction ATP + ubiquitin + [E1 ubiquitin-activating enzyme]-L-cysteine = AMP + diphosphate + S-ubiquitinyl-[E1 ubiquitin-activating enzyme]-L-cysteine.. Its pathway is protein modification; protein ubiquitination. Functionally, activates ubiquitin by first adenylating its C-terminal glycine residue with ATP, and thereafter linking this residue to the side chain of a cysteine residue in E1, yielding a ubiquitin-E1 thioester and free AMP. This is Ubiquitin-activating enzyme E1 2 (UBA2) from Triticum aestivum (Wheat).